The sequence spans 20 residues: Non-specific lipid-transfer protein (20 aa).

Belongs to the plant LTP family. Leaf.

In terms of biological role, plant non-specific lipid-transfer proteins transfer phospholipids as well as galactolipids across membranes. May play a role in wax or cutin deposition in the cell walls of expanding epidermal cells and certain secretory tissues. The protein is Non-specific lipid-transfer protein of Cannabis sativa (Hemp).